The primary structure comprises 309 residues: Ribosomal RNA small subunit methyltransferase H (309 aa).

Residues 33 to 35 (GGH), Asp53, Phe79, Asp100, and Gln107 contribute to the S-adenosyl-L-methionine site.

The protein belongs to the methyltransferase superfamily. RsmH family.

The protein localises to the cytoplasm. It carries out the reaction cytidine(1402) in 16S rRNA + S-adenosyl-L-methionine = N(4)-methylcytidine(1402) in 16S rRNA + S-adenosyl-L-homocysteine + H(+). In terms of biological role, specifically methylates the N4 position of cytidine in position 1402 (C1402) of 16S rRNA. This chain is Ribosomal RNA small subunit methyltransferase H, found in Clostridium botulinum (strain Loch Maree / Type A3).